Consider the following 303-residue polypeptide: MSRPYQPQRYSLISELHKNFHYVDVSVIQSEFKNVILKTVVPKLSQPATHLEKGDFLLKICQLLMIHREEEQQILNKVKSNIIYFLNELWSAEYGKVQEQVKNILCEVKLDKTDSELSTYLAQEIPKLTVLKYPTHFKVCEETIPNGRWCLHNLLGIEQYYKDFSNIVLHDPETSLGSVQAYSRLSKLLFWCDSFMNKIYPCNAFNSSINQVVLWSTMFHFYSVAHCNDCISESISFTEALLKQEVSAFYEWCLEEEYEEDRMAKFMKFSADQITILSTHTDLQNLAEYIYSYKKCLINRRFE.

Belongs to the herpesviridae BBRF1 family.

This is an uncharacterized protein from Saimiriine herpesvirus 2 (strain 11) (SaHV-2).